The chain runs to 638 residues: Threonine--tRNA ligase (638 aa).

A TGS domain is found at M1–T61. The tract at residues D242–P533 is catalytic. C333, H384, and H510 together coordinate Zn(2+).

It belongs to the class-II aminoacyl-tRNA synthetase family. Homodimer. Requires Zn(2+) as cofactor.

It is found in the cytoplasm. It catalyses the reaction tRNA(Thr) + L-threonine + ATP = L-threonyl-tRNA(Thr) + AMP + diphosphate + H(+). Catalyzes the attachment of threonine to tRNA(Thr) in a two-step reaction: L-threonine is first activated by ATP to form Thr-AMP and then transferred to the acceptor end of tRNA(Thr). Also edits incorrectly charged L-seryl-tRNA(Thr). This chain is Threonine--tRNA ligase, found in Dechloromonas aromatica (strain RCB).